Consider the following 129-residue polypeptide: Succinate dehydrogenase subunit 3-2, mitochondrial (129 aa).

A mitochondrion-targeting transit peptide spans 1–58 (MEKYQSKARFAPLSDAPFALRGALGSSNSSFNNIDHLRQSSSSGQARSYTSSPLGALR). A compositionally biased stretch (polar residues) spans 27-53 (SNSSFNNIDHLRQSSSSGQARSYTSSP). The segment at 27–66 (SNSSFNNIDHLRQSSSSGQARSYTSSPLGALRPKMFPSGN) is disordered. H87 provides a ligand contact to heme. Residues 105–127 (IFGAALGAVIISIPLATKFSLMF) traverse the membrane as a helical segment.

Component of complex II composed of eight subunits in plants: four classical SDH subunits SDH1, SDH2, SDH3 and SDH4 (a flavoprotein (FP), an iron-sulfur protein (IP), and a cytochrome b composed of a large and a small subunit.), as well as four subunits unknown in mitochondria from bacteria and heterotrophic eukaryotes. Requires heme as cofactor.

It is found in the mitochondrion inner membrane. Its pathway is carbohydrate metabolism; tricarboxylic acid cycle. In terms of biological role, membrane-anchoring subunit of succinate dehydrogenase (SDH). This Oryza sativa subsp. japonica (Rice) protein is Succinate dehydrogenase subunit 3-2, mitochondrial.